Consider the following 741-residue polypeptide: Phosphoribosylformylglycinamidine synthase subunit PurL (741 aa).

Histidine 53 is a catalytic residue. Residues tyrosine 56 and lysine 95 each contribute to the ATP site. Glutamate 97 contributes to the Mg(2+) binding site. Substrate contacts are provided by residues 98–101 (SHNH) and arginine 120. Catalysis depends on histidine 99, which acts as the Proton acceptor. Residue aspartate 121 coordinates Mg(2+). Glutamine 244 is a substrate binding site. Aspartate 274 lines the Mg(2+) pocket. 318-320 (ESQ) serves as a coordination point for substrate. ATP contacts are provided by aspartate 501 and glycine 538. Asparagine 539 contributes to the Mg(2+) binding site. Serine 541 contributes to the substrate binding site.

It belongs to the FGAMS family. As to quaternary structure, monomer. Part of the FGAM synthase complex composed of 1 PurL, 1 PurQ and 2 PurS subunits.

Its subcellular location is the cytoplasm. The catalysed reaction is N(2)-formyl-N(1)-(5-phospho-beta-D-ribosyl)glycinamide + L-glutamine + ATP + H2O = 2-formamido-N(1)-(5-O-phospho-beta-D-ribosyl)acetamidine + L-glutamate + ADP + phosphate + H(+). It functions in the pathway purine metabolism; IMP biosynthesis via de novo pathway; 5-amino-1-(5-phospho-D-ribosyl)imidazole from N(2)-formyl-N(1)-(5-phospho-D-ribosyl)glycinamide: step 1/2. Functionally, part of the phosphoribosylformylglycinamidine synthase complex involved in the purines biosynthetic pathway. Catalyzes the ATP-dependent conversion of formylglycinamide ribonucleotide (FGAR) and glutamine to yield formylglycinamidine ribonucleotide (FGAM) and glutamate. The FGAM synthase complex is composed of three subunits. PurQ produces an ammonia molecule by converting glutamine to glutamate. PurL transfers the ammonia molecule to FGAR to form FGAM in an ATP-dependent manner. PurS interacts with PurQ and PurL and is thought to assist in the transfer of the ammonia molecule from PurQ to PurL. The protein is Phosphoribosylformylglycinamidine synthase subunit PurL of Latilactobacillus sakei subsp. sakei (strain 23K) (Lactobacillus sakei subsp. sakei).